The sequence spans 146 residues: Mitochondrial pyruvate carrier 3 (146 aa).

Residues 1–20 constitute a mitochondrion transit peptide; that stretch reads MSASAFNFAFRRFWNSETGP. 3 consecutive transmembrane segments (helical) span residues 23-39, 55-71, and 78-94; these read VHFW…FAGL, LSLL…SFVI, and LASV…YHLT.

Belongs to the mitochondrial pyruvate carrier (MPC) (TC 2.A.105) family. The functional 150 kDa pyruvate import complex is a heteromer of MPC1 and either MPC2 or MPC3.

It is found in the mitochondrion. It localises to the mitochondrion inner membrane. In terms of biological role, mediates the uptake of pyruvate into mitochondria. This chain is Mitochondrial pyruvate carrier 3, found in Saccharomyces cerevisiae (strain ATCC 204508 / S288c) (Baker's yeast).